A 141-amino-acid chain; its full sequence is uncharacterized protein (141 aa).

It belongs to the peptidase C56 family.

This is an uncharacterized protein from Streptomyces lividans.